Here is a 125-residue protein sequence, read N- to C-terminus: Large ribosomal subunit protein uL18 (125 aa).

Belongs to the universal ribosomal protein uL18 family. In terms of assembly, part of the 50S ribosomal subunit; part of the 5S rRNA/L5/L18/L25 subcomplex. Contacts the 5S and 23S rRNAs.

This is one of the proteins that bind and probably mediate the attachment of the 5S RNA into the large ribosomal subunit, where it forms part of the central protuberance. In Anaplasma marginale (strain Florida), this protein is Large ribosomal subunit protein uL18.